Here is a 199-residue protein sequence, read N- to C-terminus: Ion-translocating oxidoreductase complex subunit A (199 aa).

Transmembrane regions (helical) follow at residues L8–G28, V49–V69, F75–I95, S106–L126, V138–I158, and A178–L198.

This sequence belongs to the NqrDE/RnfAE family. The Rnf complex is probably composed of eight subunits, including RnfA, RnfB, RnfC, RnfD, RnfE and RnfG.

Its subcellular location is the cell membrane. Its function is as follows. Part of a membrane-bound complex that couples electron transfer with translocation of ions across the membrane. Catalyzes Na(+) transport, most probably coupled to electron transfer from reduced ferredoxin to methanophenazine and heterodisulfide reductase. Involved in heterodisulfide reduction during methanogenesis from acetate. This Methanosarcina acetivorans (strain ATCC 35395 / DSM 2834 / JCM 12185 / C2A) protein is Ion-translocating oxidoreductase complex subunit A.